A 246-amino-acid polypeptide reads, in one-letter code: tRNA (guanine-N(1)-)-methyltransferase (246 aa).

Residues G114 and 134–139 (IGDYIL) contribute to the S-adenosyl-L-methionine site.

Belongs to the RNA methyltransferase TrmD family. As to quaternary structure, homodimer.

The protein resides in the cytoplasm. The catalysed reaction is guanosine(37) in tRNA + S-adenosyl-L-methionine = N(1)-methylguanosine(37) in tRNA + S-adenosyl-L-homocysteine + H(+). Functionally, specifically methylates guanosine-37 in various tRNAs. In Coxiella burnetii (strain CbuG_Q212) (Coxiella burnetii (strain Q212)), this protein is tRNA (guanine-N(1)-)-methyltransferase.